The following is a 300-amino-acid chain: Ribonuclease HIII (300 aa).

The region spanning 83–300 (IPIIGSDEVG…THKAQALLTK (218 aa)) is the RNase H type-2 domain. 3 residues coordinate a divalent metal cation: Asp89, Glu90, and Asp194.

It belongs to the RNase HII family. RnhC subfamily. Mn(2+) is required as a cofactor. Requires Mg(2+) as cofactor.

The protein resides in the cytoplasm. The enzyme catalyses Endonucleolytic cleavage to 5'-phosphomonoester.. Functionally, endonuclease that specifically degrades the RNA of RNA-DNA hybrids. The sequence is that of Ribonuclease HIII from Streptococcus pyogenes serotype M28 (strain MGAS6180).